The following is a 309-amino-acid chain: Ribosomal RNA large subunit methyltransferase F (309 aa).

Positions 1–21 (MASQHDKKSVQSGLLHPRNPH) are disordered.

It belongs to the methyltransferase superfamily. METTL16/RlmF family.

The protein resides in the cytoplasm. It catalyses the reaction adenosine(1618) in 23S rRNA + S-adenosyl-L-methionine = N(6)-methyladenosine(1618) in 23S rRNA + S-adenosyl-L-homocysteine + H(+). In terms of biological role, specifically methylates the adenine in position 1618 of 23S rRNA. This is Ribosomal RNA large subunit methyltransferase F from Desulfotalea psychrophila (strain LSv54 / DSM 12343).